A 389-amino-acid polypeptide reads, in one-letter code: Jasmonate O-methyltransferase (389 aa).

Tyr18 is a binding site for S-adenosyl-L-homocysteine. Gln25 contacts jasmonate. Positions 60, 65, 97, 98, 142, and 143 each coordinate S-adenosyl-L-homocysteine. His163 and Trp164 together coordinate jasmonate. Positions 186, 272, 274, and 275 each coordinate Mg(2+).

Belongs to the methyltransferase superfamily. Type-7 methyltransferase family. Mg(2+) serves as cofactor. Expressed in rosettes, cauline leaves and developing flowers but not in young seedlings.

It is found in the cytoplasm. The protein resides in the nucleus. It catalyses the reaction jasmonate + S-adenosyl-L-methionine = methyl (-)-jasmonate + S-adenosyl-L-homocysteine. It participates in lipid metabolism; oxylipin biosynthesis. Catalyzes the methylation of jasmonate into methyljasmonate, a plant volatile that acts as an important cellular regulator mediating diverse developmental processes and defense responses. The protein is Jasmonate O-methyltransferase of Arabidopsis thaliana (Mouse-ear cress).